The primary structure comprises 348 residues: Major outer membrane protein (348 aa).

The N-terminal stretch at 1–20 (MKKTIVALAVAAVAATSANA) is a signal peptide.

As to quaternary structure, disulfide bond interactions within and between MOMP molecules and other components form high molecular-weight oligomers.

It localises to the cell outer membrane. Structural rigidity of the outer membrane of elementary bodies and porin forming, permitting diffusion of solutes through the intracellular reticulate body membrane. This is Major outer membrane protein (ompH) from Pasteurella multocida (strain Pm70).